A 146-amino-acid chain; its full sequence is Probable acetyltransferase HI_0677 (146 aa).

Residues 1–146 enclose the N-acetyltransferase domain; that stretch reads MKLFKAEQWN…ERLFELSLSC (146 aa).

The sequence is that of Probable acetyltransferase HI_0677 from Haemophilus influenzae (strain ATCC 51907 / DSM 11121 / KW20 / Rd).